The chain runs to 467 residues: Involucrin (467 aa).

The interval 48–467 (EIQEKGFPKH…ELENRTQQEK (420 aa)) is disordered. The segment covering 49–75 (IQEKGFPKHEEKRPNPVKDLPDQKCEH) has biased composition (basic and acidic residues). Low complexity-rich tracts occupy residues 76–95 (QQQP…QQEL) and 105–177 (QQLP…VPQE). Basic and acidic residues-rich tracts occupy residues 178-192 (LHLR…DPEL) and 220-231 (RHQEPQEQELHL). Low complexity predominate over residues 278 to 290 (QQQQESPEPELQL). Basic and acidic residues-rich tracts occupy residues 295-318 (QSHE…ELYL), 348-373 (LEEK…HEPD), 380-391 (EKQKLGEPELHL), 415-437 (KQEK…KELS), and 450-467 (KQLE…QQEK).

The protein belongs to the involucrin family. Directly or indirectly cross-linked to cornifelin (CNFN). Substrate of transglutaminase. Specific glutamines or lysines are cross-linked to keratins, desmoplakin and to inter involucrin molecules. Keratinocytes of epidermis and other stratified squamous epithelia.

It localises to the cytoplasm. Part of the insoluble cornified cell envelope (CE) of stratified squamous epithelia. This is Involucrin (Ivl) from Mus musculus (Mouse).